Consider the following 70-residue polypeptide: Large ribosomal subunit protein bL31 (70 aa).

Residues cysteine 16, cysteine 18, cysteine 37, and cysteine 40 each coordinate Zn(2+).

Belongs to the bacterial ribosomal protein bL31 family. Type A subfamily. As to quaternary structure, part of the 50S ribosomal subunit. It depends on Zn(2+) as a cofactor.

Binds the 23S rRNA. This is Large ribosomal subunit protein bL31 from Shewanella oneidensis (strain ATCC 700550 / JCM 31522 / CIP 106686 / LMG 19005 / NCIMB 14063 / MR-1).